Reading from the N-terminus, the 243-residue chain is MSANPLDQFKISTIFKLPSIGGYNIDFTNASLFMVLSTLIISLFCYIGLRKENILPNSMQLIIEAIYNFIVSTIESNVGRKGLQYIPLVFTIFTFIATCNLLGVLPLGFTVTSHIAVTFAISMVVFISVTAIGFKHQGIHFLRILLPKGTPGWLAPMMVFIELFAYCARPVSLSIRLAANMIAGHTIIKVIAGFVIKMNIFLTPLPMAFIIILIGFEIFVAILQAYIFTVLTCVYLSDAINEH.

7 consecutive transmembrane segments (helical) span residues 29-49, 54-74, 89-109, 114-134, 144-164, 182-202, and 208-228; these read NASL…YIGL, ILPN…VSTI, VFTI…PLGF, HIAV…AIGF, ILLP…IELF, IAGH…NIFL, and AFII…AYIF.

Belongs to the ATPase A chain family. In terms of assembly, F-type ATPases have 2 components, CF(1) - the catalytic core - and CF(0) - the membrane proton channel. CF(1) has five subunits: alpha(3), beta(3), gamma(1), delta(1), epsilon(1). CF(0) has three main subunits: a(1), b(2) and c(9-12). The alpha and beta chains form an alternating ring which encloses part of the gamma chain. CF(1) is attached to CF(0) by a central stalk formed by the gamma and epsilon chains, while a peripheral stalk is formed by the delta and b chains.

It is found in the cell inner membrane. Its function is as follows. Key component of the proton channel; it plays a direct role in the translocation of protons across the membrane. This Ehrlichia chaffeensis (strain ATCC CRL-10679 / Arkansas) protein is ATP synthase subunit a.